The following is a 496-amino-acid chain: Glutathione reductase, cytosolic (496 aa).

Ser32, Gly33, Glu52, Thr69, Cys70, and Lys78 together coordinate FAD. Glutathione is bound at residue Ser32. An intrachain disulfide couples Cys70 to Cys75. Tyr127 serves as a coordination point for glutathione. Residue Gly143 coordinates FAD. NADP(+)-binding residues include Gly208, Ile211, Glu214, Arg231, Arg237, and Gly294. Positions 335 and 343 each coordinate FAD. Ala373 contributes to the NADP(+) binding site. His469 serves as a coordination point for FAD. His469 serves as the catalytic Proton acceptor.

Belongs to the class-I pyridine nucleotide-disulfide oxidoreductase family. Homodimer. Requires FAD as cofactor.

It is found in the cytoplasm. The enzyme catalyses 2 glutathione + NADP(+) = glutathione disulfide + NADPH + H(+). In terms of biological role, catalyzes the reduction of glutathione disulfide (GSSG) to reduced glutathione (GSH). Constitutes the major mechanism to maintain a high GSH:GSSG ratio in the cytosol. The sequence is that of Glutathione reductase, cytosolic (GRC2) from Oryza sativa subsp. japonica (Rice).